The primary structure comprises 62 residues: Large ribosomal subunit protein uL29 (62 aa).

Belongs to the universal ribosomal protein uL29 family.

The chain is Large ribosomal subunit protein uL29 from Helicobacter hepaticus (strain ATCC 51449 / 3B1).